A 367-amino-acid polypeptide reads, in one-letter code: Phosphoribosylaminoimidazole-succinocarboxamide synthase (367 aa).

This sequence belongs to the SAICAR synthetase family.

It catalyses the reaction 5-amino-1-(5-phospho-D-ribosyl)imidazole-4-carboxylate + L-aspartate + ATP = (2S)-2-[5-amino-1-(5-phospho-beta-D-ribosyl)imidazole-4-carboxamido]succinate + ADP + phosphate + 2 H(+). It functions in the pathway purine metabolism; IMP biosynthesis via de novo pathway; 5-amino-1-(5-phospho-D-ribosyl)imidazole-4-carboxamide from 5-amino-1-(5-phospho-D-ribosyl)imidazole-4-carboxylate: step 1/2. The chain is Phosphoribosylaminoimidazole-succinocarboxamide synthase from Shewanella baltica (strain OS185).